The sequence spans 323 residues: MTKTKIIFMGTPQFAATVLKGLIDSNKYEILAVVTQPDRKVGRKQELRMTPVKELALTVNLPVLQPEKLSGSVEMTQIMTLLESGEVGIVTAAFGQFLPGKLLVVARFAVNTHASLLPKYRGGAPIHYAIMNGEKEAGVTIMEMIRKMDAGDMIAQNSTPILEEDNVGTMFEKLAFVGRDLLLETLPKYLEGQLKAQAQNEDEVTFSPNISPEEEKIDWNKSAREIFNKVRGMNPFPVAHTLWNGERFKIYESKVADEIVNNSDNPLQAGQIVEKTKKSLKVATGNGILELLTVQPAGKPKMDIVSFLNGLGQKMQVGDKLGD.

115–118 (SLLP) provides a ligand contact to (6S)-5,6,7,8-tetrahydrofolate.

Belongs to the Fmt family.

The catalysed reaction is L-methionyl-tRNA(fMet) + (6R)-10-formyltetrahydrofolate = N-formyl-L-methionyl-tRNA(fMet) + (6S)-5,6,7,8-tetrahydrofolate + H(+). Attaches a formyl group to the free amino group of methionyl-tRNA(fMet). The formyl group appears to play a dual role in the initiator identity of N-formylmethionyl-tRNA by promoting its recognition by IF2 and preventing the misappropriation of this tRNA by the elongation apparatus. This is Methionyl-tRNA formyltransferase from Lactococcus lactis subsp. cremoris (strain MG1363).